The primary structure comprises 574 residues: Iron hydrogenase 1 (574 aa).

Positions 1-78 constitute a 2Fe-2S ferredoxin-type domain; sequence MKTIIINGVQ…GMIINTNSDA (78 aa). [2Fe-2S] cluster is bound by residues Cys-34, Cys-46, Cys-49, and Cys-62. Residues 78–117 form the 4Fe-4S His(Cys)3-ligated-type domain; that stretch reads AVNEKIKSRISQLLDIHEFKCGPCNRRENCEFLKLVIKYK. [4Fe-4S] cluster-binding residues include His-94, Cys-98, Cys-101, Cys-107, Cys-147, Cys-150, Cys-153, Cys-157, Cys-190, Cys-193, Cys-196, Cys-200, Cys-300, Cys-355, Cys-499, and Cys-503. 2 consecutive 4Fe-4S ferredoxin-type domains span residues 138–167 and 181–210; these read KSLTVDRTKCLLCGRCVNACGKNTETYAMK and DEKCFDDTNCLLCGQCIIACPVAALSEKSH. Cys-503 lines the Fe(2+) pocket.

Monomer. It depends on [2Fe-2S] cluster as a cofactor. Requires [4Fe-4S] cluster as cofactor. Fe(2+) serves as cofactor.

It catalyses the reaction H2 + 2 oxidized [2Fe-2S]-[ferredoxin] = 2 reduced [2Fe-2S]-[ferredoxin] + 2 H(+). The sequence is that of Iron hydrogenase 1 from Clostridium pasteurianum.